Reading from the N-terminus, the 175-residue chain is Adenine phosphoribosyltransferase (175 aa).

This sequence belongs to the purine/pyrimidine phosphoribosyltransferase family. As to quaternary structure, homodimer.

The protein localises to the cytoplasm. The enzyme catalyses AMP + diphosphate = 5-phospho-alpha-D-ribose 1-diphosphate + adenine. The protein operates within purine metabolism; AMP biosynthesis via salvage pathway; AMP from adenine: step 1/1. Functionally, catalyzes a salvage reaction resulting in the formation of AMP, that is energically less costly than de novo synthesis. This Clavibacter michiganensis subsp. michiganensis (strain NCPPB 382) protein is Adenine phosphoribosyltransferase.